A 110-amino-acid polypeptide reads, in one-letter code: Late cornified envelope protein 1A (110 aa).

Over residues 1–10 (MSCQQSQQQC) the composition is skewed to low complexity. 2 disordered regions span residues 1–23 (MSCQ…CPPK) and 83–110 (QSSG…GGCC). A compositionally biased stretch (pro residues) spans 11–23 (QPPPKCTPKCPPK). A compositionally biased stretch (low complexity) spans 83–95 (QSSGCCSQPSGGS). Residues 96–110 (SCCGGDSGQHSGGCC) are compositionally biased toward gly residues.

Belongs to the LCE family. Interacts with CYSRT1. Skin-specific. Expression was readily detected in adult trunk skin, adult arm skin, fetal skin, penal skin, vulva, esophagus and tongue. Not expressed in the cervix, rectum, lung, colon, or placenta.

Precursors of the cornified envelope of the stratum corneum. This chain is Late cornified envelope protein 1A (LCE1A), found in Homo sapiens (Human).